The primary structure comprises 545 residues: DNA-binding protein REPIN1 (545 aa).

The disordered stretch occupies residues 1–50; that stretch reads MLEQRCRGPTAMGPAQPWLFSGPSQESSQPDRGLRYQGKSAQPRGQTPGK. At Ser27 the chain carries Phosphoserine. Lys39 carries the N6-acetyllysine modification. A C2H2-type 1; atypical zinc finger spans residues 52–74; that stretch reads HRCAHCRKRFPGWVALWLHARRC. 2 consecutive C2H2-type zinc fingers follow at residues 80 to 102 and 111 to 133; these read LPCH…LQVH and FICH…LRAH. The C2H2-type 4; atypical zinc finger occupies 140 to 162; that stretch reads ITCPECDRRFWRQKQLRAHLRRC. 11 C2H2-type zinc fingers span residues 172–194, 229–251, 257–279, 285–307, 353–375, 381–403, 409–431, 437–459, 465–487, 493–515, and 521–543; these read FICG…KRVH, FQCA…RRVH, HQCP…RRIH, YPCT…SKIH, HSCS…QRQH, FACT…SRVH, FACE…RRDH, FVCP…RRIH, YVCP…RRIH, YACP…RKSH, and FCCA…QKKH. Lys269 carries the N6-acetyllysine modification.

In terms of assembly, homodimers and homomultimers. Found in a complex with RIP60 and RIP100.

It localises to the nucleus. The protein localises to the cytoplasm. Its subcellular location is the cytosol. Its function is as follows. Sequence-specific double-stranded DNA-binding protein. Binds ATT-rich and T-rich DNA sequences and facilitates DNA bending. May regulate the expression of genes involved in cellular fatty acid import, including SCARB1/CD36, and genes involved in lipid droplet formation. May regulate the expression of LCN2, and thereby influence iron metabolism and apoptosis-related pathways. May regulate the expression of genes involved in glucose transport. This chain is DNA-binding protein REPIN1 (Repin1), found in Mus musculus (Mouse).